Here is a 538-residue protein sequence, read N- to C-terminus: METKNENSDVSRAEEFKSQANEAFKGHKYSSAIDLYTKAIELNSNNAVYWANRAFAHTKLEEYGSAIQDASKAIEVDSRYSKGYYRRGAAYLAMGKFKDALKDFQQVKRLSPNDPDATRKLKECEKAVMKLKFEEAISVPVSERRSVAESIDFHTIGNKPRSSSMPTKTALAAVVAAVMVVAVRGFATTEILMVLVSVVLGTFWWGSFSGKVEPQYSGARIEGEEVTLDFVKTMMEDFKNQKTLHKRYAYQIVLQTRQILLALPSLVDISVPHGKHITVCGDVHGQFYDLLNIFELNGLPSEENPYLFNGDFVDRGSFSVEIILTLFAFKCMCPSSIYLARGNHESKSMNKIYGFEGEVRSKLSEKFVDLFAEVFCYLPLAHVINGKVFVVHGGLFSVDGVKLSDIRAIDRFCEPPEEGLMCELLWSDPQPLPGRGPSKRGVGLSFGGDVTKRFLQDNNLDLLVRSHEVKDEGYEVEHDGKLITVFSAPNYCDQMGNKGAFIRFEAPDMKPNIVTFSAVPHPDVKPMAYANNFLRMFN.

3 TPR repeats span residues 13 to 46 (AEEF…NSNN), 48 to 80 (VYWA…DSRY), and 81 to 114 (SKGY…SPND). A run of 2 helical transmembrane segments spans residues 163–183 (SSMP…VVAV) and 185–205 (GFAT…TFWW). The Mn(2+) site is built by Asp-282, His-284, Asp-311, and Asn-343. The Proton donor role is filled by His-344. Mn(2+) is bound by residues His-392 and His-467.

The protein belongs to the PPP phosphatase family. PP-5 (PP-T) subfamily. As to quaternary structure, interacts with PHYA and PHYB, mostly when they are phosphorylated and in Pfr forms. It depends on Mn(2+) as a cofactor.

The protein resides in the endoplasmic reticulum membrane. Its subcellular location is the nucleus membrane. The protein localises to the cytoplasm. It localises to the nucleus. It is found in the nucleoplasm. The protein resides in the nucleus speckle. It catalyses the reaction O-phospho-L-seryl-[protein] + H2O = L-seryl-[protein] + phosphate. The enzyme catalyses O-phospho-L-threonyl-[protein] + H2O = L-threonyl-[protein] + phosphate. Activated by arachidonic acid (AA). Functionally, isoform 2 dephosphorylates phosphorylated phytochromes, with a preference toward Pfr forms, and enhances phytochrome-mediated photoresponses, probably by enhancing their stability and their binding affinity for light signal transducers such as NDPK2. Can use para-nitrophenylphosphate (pNPP) as substrate. This is Serine/threonine-protein phosphatase 5 (PAPP5) from Arabidopsis thaliana (Mouse-ear cress).